The chain runs to 122 residues: Large ribosomal subunit protein uL18 (122 aa).

The segment at 1-26 (MSNLSRKQQTQKRHRRLRRHLKGTAQ) is disordered. The segment covering 9-22 (QTQKRHRRLRRHLK) has biased composition (basic residues).

It belongs to the universal ribosomal protein uL18 family. Part of the 50S ribosomal subunit; part of the 5S rRNA/L5/L18/L25 subcomplex. Contacts the 5S and 23S rRNAs.

This is one of the proteins that bind and probably mediate the attachment of the 5S RNA into the large ribosomal subunit, where it forms part of the central protuberance. The sequence is that of Large ribosomal subunit protein uL18 from Prochlorococcus marinus (strain MIT 9313).